Consider the following 393-residue polypeptide: CCA-adding enzyme (393 aa).

ATP-binding residues include G27 and R30. G27 and R30 together coordinate CTP. Mg(2+) is bound by residues D40 and D42. Positions 111, 154, 157, 160, and 163 each coordinate ATP. R111, D154, R157, R160, and R163 together coordinate CTP.

The protein belongs to the tRNA nucleotidyltransferase/poly(A) polymerase family. Bacterial CCA-adding enzyme type 3 subfamily. In terms of assembly, homodimer. It depends on Mg(2+) as a cofactor.

It carries out the reaction a tRNA precursor + 2 CTP + ATP = a tRNA with a 3' CCA end + 3 diphosphate. It catalyses the reaction a tRNA with a 3' CCA end + 2 CTP + ATP = a tRNA with a 3' CCACCA end + 3 diphosphate. Its function is as follows. Catalyzes the addition and repair of the essential 3'-terminal CCA sequence in tRNAs without using a nucleic acid template. Adds these three nucleotides in the order of C, C, and A to the tRNA nucleotide-73, using CTP and ATP as substrates and producing inorganic pyrophosphate. tRNA 3'-terminal CCA addition is required both for tRNA processing and repair. Also involved in tRNA surveillance by mediating tandem CCA addition to generate a CCACCA at the 3' terminus of unstable tRNAs. While stable tRNAs receive only 3'-terminal CCA, unstable tRNAs are marked with CCACCA and rapidly degraded. The polypeptide is CCA-adding enzyme (Listeria monocytogenes serovar 1/2a (strain ATCC BAA-679 / EGD-e)).